The primary structure comprises 308 residues: UPF0282 protein YG5714_2245 (308 aa).

Belongs to the UPF0282 family.

The sequence is that of UPF0282 protein YG5714_2245 from Saccharolobus islandicus (strain Y.G.57.14 / Yellowstone #1) (Sulfolobus islandicus).